We begin with the raw amino-acid sequence, 485 residues long: UDP-N-acetylmuramate--L-alanine ligase (485 aa).

120–126 (GSHGKTT) provides a ligand contact to ATP.

This sequence belongs to the MurCDEF family.

Its subcellular location is the cytoplasm. The catalysed reaction is UDP-N-acetyl-alpha-D-muramate + L-alanine + ATP = UDP-N-acetyl-alpha-D-muramoyl-L-alanine + ADP + phosphate + H(+). Its pathway is cell wall biogenesis; peptidoglycan biosynthesis. Cell wall formation. The chain is UDP-N-acetylmuramate--L-alanine ligase from Rickettsia conorii (strain ATCC VR-613 / Malish 7).